A 273-amino-acid polypeptide reads, in one-letter code: Putative pyruvate, phosphate dikinase regulatory protein (273 aa).

149–156 (GPSRTSKT) contributes to the ADP binding site.

This sequence belongs to the pyruvate, phosphate/water dikinase regulatory protein family. PDRP subfamily.

It carries out the reaction N(tele)-phospho-L-histidyl/L-threonyl-[pyruvate, phosphate dikinase] + ADP = N(tele)-phospho-L-histidyl/O-phospho-L-threonyl-[pyruvate, phosphate dikinase] + AMP + H(+). The catalysed reaction is N(tele)-phospho-L-histidyl/O-phospho-L-threonyl-[pyruvate, phosphate dikinase] + phosphate + H(+) = N(tele)-phospho-L-histidyl/L-threonyl-[pyruvate, phosphate dikinase] + diphosphate. Bifunctional serine/threonine kinase and phosphorylase involved in the regulation of the pyruvate, phosphate dikinase (PPDK) by catalyzing its phosphorylation/dephosphorylation. The sequence is that of Putative pyruvate, phosphate dikinase regulatory protein from Rickettsia rickettsii (strain Iowa).